A 1299-amino-acid chain; its full sequence is MSSESSFGLMQIGLATAEDIRGWSYGEVKKPETINYRTLKPEKDGLFCEKIFGPSRDWECYCGKYKRVRFKGIICERCGVEVTRAKVRRERMGHIELAAPVTHIWYFKGVPSRLGYLLDLAPKDLEKVIYFAAYMITSVDTESRHAELPNLQVEHDLEKKQMVDNRDSDIATIARDLEDELARLEGEGAKAADKKKARDSADRQMANVRKRADADIERLEQVWDRFKNLKVADLEGDEGLYRELRDRYGLYFEGSMGAEAIKKRLETFDMQAEAESLRDTIQNGKGQRKTRALKRLKVVNAFLTTNNSPLGMVLDAVPVIPPELRPMVQLDGGRFATSDLNDLYRRVINRNNRLKRLLDLGAPEIIVNNEKRMLQEAVDSLFDNGRRGRPVTGPGNRPLKSLSDMLKGKQGRFRQNLLGKRVDYSGRSVIVVGPQLKLHQCGLPKQMALELFKPFVMKRLVDLNHAQNIKSAKRMVERYRPQVWDVLEEIITEHPVLLNRAPTLHRLGIQAFEPQLVEGKAIQLHPLVCGAFNADFDGDQMAVHLPLSPEAQAEARILMLSSNNILKPSDGRPVTLPSQDMIIGLYHLTTKRVGSAGEGRIFSSVSEAIMAYDARDLHLNSQVKIRLDDFVPYAGWEAPEGWEPGQPALVETSLGQVIFNQTLPEDYPWVEAVADKGELSRIVNDLAERYPKVVTAATLDNLKDAGFYWATRSGVTVAISDIEVPTSKPAILAGYENMAAKIQGQYDKGLIDDDERRQELIEIWNKATNEIAQAMRDSLSPMNTINRMVSSGARGNWMQVRQIAGIRGLVANPKGEIIPRPIKSSYREGLSVLEYFIATHGARKGLADTALRTANSGYLTRRLVDVSQDVIVREEDCGTERGLVTPIAVPDSNGELVLDENVENSAYARTLAVDVVDAQGNVLAAGGTDCGDVVIDQLLAAGITEVKVRSVLTCESKVGTCALCYGRSLATGKTVDIGEAVGIIAAQSIGEPGTQLTMRTFHTGGAVSAGGGDDITQGLPRIQELFEARTPKGVAPIAEAAGRITIEESERQMRLVITPDDGSEEIAYPVLRRSRLLIEDGEHVSVGQKLINGPVDPKQVLRIMGPRAAQKFLVDEVQGVYRSQGIGIHDKHVEVIVRQMLRRVTVIESGDSDLLPGELAERARFEDENRRVVSEGKAPASGRPELMGITKASLATESWLSAASFQETTRVLTQAAMEGKSDPLLGLKENVIIGKLIPAGTGLPRYTEVTVEPTEEAKASLFTGPSAFTDFSYDALGGDGAPEFHAIPLDDYDLGNDFR.

Zn(2+)-binding residues include Cys-60, Cys-62, Cys-75, and Cys-78. Positions 535, 537, and 539 each coordinate Mg(2+). Zn(2+) is bound by residues Cys-877, Cys-954, Cys-961, and Cys-964.

The protein belongs to the RNA polymerase beta' chain family. The RNAP catalytic core consists of 2 alpha, 1 beta, 1 beta' and 1 omega subunit. When a sigma factor is associated with the core the holoenzyme is formed, which can initiate transcription. Requires Mg(2+) as cofactor. It depends on Zn(2+) as a cofactor.

The catalysed reaction is RNA(n) + a ribonucleoside 5'-triphosphate = RNA(n+1) + diphosphate. DNA-dependent RNA polymerase catalyzes the transcription of DNA into RNA using the four ribonucleoside triphosphates as substrates. The chain is DNA-directed RNA polymerase subunit beta' from Paenarthrobacter aurescens (strain TC1).